The following is a 233-amino-acid chain: Ribosome-recycling factor, mitochondrial (233 aa).

This sequence belongs to the RRF family.

Its subcellular location is the mitochondrion. Functionally, necessary for protein synthesis in mitochondria. Functions as a ribosome recycling factor in mitochondria. This chain is Ribosome-recycling factor, mitochondrial (RRF1), found in Candida glabrata (strain ATCC 2001 / BCRC 20586 / JCM 3761 / NBRC 0622 / NRRL Y-65 / CBS 138) (Yeast).